The chain runs to 664 residues: PAN2-PAN3 deadenylation complex subunit PAN3 (664 aa).

2 disordered regions span residues 1 to 27 (MATTGKSATLEDARHGTGSPKMKGREN) and 54 to 134 (DPHK…PGTM). A C3H1-type zinc finger spans residues 27 to 56 (NAKDTLCRNVTIYGRCRYEDKGCAFNHDPH). Polar residues predominate over residues 74–96 (DSPSFTPSILSSNGSSPTSQSAT). The segment covering 115–131 (PRSISSRSNSSTPTTRP) has biased composition (low complexity). Positions 265-525 (QTLPNTQLPA…NIDIFITGIS (261 aa)) are pseudokinase domain. Residues arginine 317, 366–373 (DYHPLSKT), and 425–426 (SK) each bind ATP. Residues 526–564 (STLMSTFDSALHLDDQLTSDLSRELENGRLVRLMTKLNF) adopt a coiled-coil conformation. Positions 565–664 (VNERPEYEHD…LKPSASRRLH (100 aa)) are knob domain.

It belongs to the protein kinase superfamily. PAN3 family. Homodimer. Forms a heterotrimer with a catalytic subunit pan2 to form the poly(A)-nuclease (PAN) deadenylation complex. Interacts (via PAM-2 motif) with poly(A)-binding protein pab1 (via PABC domain), conferring substrate specificity of the enzyme complex.

Its subcellular location is the cytoplasm. In terms of biological role, regulatory subunit of the poly(A)-nuclease (PAN) deadenylation complex, one of two cytoplasmic mRNA deadenylases involved in mRNA turnover. PAN specifically shortens poly(A) tails of RNA and the activity is stimulated by poly(A)-binding protein pab1. PAN deadenylation is followed by rapid degradation of the shortened mRNA tails by the CCR4-NOT complex. Deadenylated mRNAs are then degraded by two alternative mechanisms, namely exosome-mediated 3'-5' exonucleolytic degradation, or deadenylation-dependent mRNA decaping and subsequent 5'-3' exonucleolytic degradation by xrn1. May also be involved in post-transcriptional maturation of mRNA poly(A) tails. pan3 acts as a positive regulator for PAN activity, recruiting the catalytic subunit pan2 to mRNA via its interaction with RNA and with pab1. The polypeptide is PAN2-PAN3 deadenylation complex subunit PAN3 (Aspergillus niger (strain ATCC MYA-4892 / CBS 513.88 / FGSC A1513)).